We begin with the raw amino-acid sequence, 380 residues long: Tryptophan 2,3-dioxygenase (380 aa).

Substrate is bound by residues 57–61 (FIITH) and arginine 128. Histidine 313 contacts heme. Threonine 328 lines the substrate pocket.

The protein belongs to the tryptophan 2,3-dioxygenase family. As to quaternary structure, homotetramer. Dimer of dimers. Requires heme as cofactor.

It catalyses the reaction L-tryptophan + O2 = N-formyl-L-kynurenine. Its pathway is amino-acid degradation; L-tryptophan degradation via kynurenine pathway; L-kynurenine from L-tryptophan: step 1/2. It functions in the pathway pigment biosynthesis; ommochrome biosynthesis. In terms of biological role, heme-dependent dioxygenase that catalyzes the oxidative cleavage of the L-tryptophan (L-Trp) pyrrole ring and converts L-tryptophan to N-formyl-L-kynurenine. Catalyzes the oxidative cleavage of the indole moiety. This is Tryptophan 2,3-dioxygenase from Drosophila ananassae (Fruit fly).